We begin with the raw amino-acid sequence, 1593 residues long: DNA-directed RNA polymerase subunit beta' (1593 aa).

Zn(2+) contacts are provided by cysteine 74, cysteine 76, cysteine 89, and cysteine 92. Residues aspartate 648, aspartate 650, and aspartate 652 each coordinate Mg(2+). Zn(2+)-binding residues include cysteine 1026, cysteine 1100, cysteine 1107, and cysteine 1110.

Belongs to the RNA polymerase beta' chain family. As to quaternary structure, the RNAP catalytic core consists of 2 alpha, 1 beta, 1 beta' and 1 omega subunit. When a sigma factor is associated with the core the holoenzyme is formed, which can initiate transcription. Mg(2+) is required as a cofactor. The cofactor is Zn(2+).

It carries out the reaction RNA(n) + a ribonucleoside 5'-triphosphate = RNA(n+1) + diphosphate. In terms of biological role, DNA-dependent RNA polymerase catalyzes the transcription of DNA into RNA using the four ribonucleoside triphosphates as substrates. The chain is DNA-directed RNA polymerase subunit beta' from Endomicrobium trichonymphae.